We begin with the raw amino-acid sequence, 375 residues long: Queuine tRNA-ribosyltransferase (375 aa).

D94 acts as the Proton acceptor in catalysis. Substrate contacts are provided by residues D94–F98, D148, Q191, and G218. Residues G249 to D255 form an RNA binding region. The active-site Nucleophile is D268. Residues T273–R277 are RNA binding; important for wobble base 34 recognition. Zn(2+)-binding residues include C306, C308, C311, and H337.

This sequence belongs to the queuine tRNA-ribosyltransferase family. As to quaternary structure, homodimer. Within each dimer, one monomer is responsible for RNA recognition and catalysis, while the other monomer binds to the replacement base PreQ1. Zn(2+) is required as a cofactor.

The catalysed reaction is 7-aminomethyl-7-carbaguanine + guanosine(34) in tRNA = 7-aminomethyl-7-carbaguanosine(34) in tRNA + guanine. The protein operates within tRNA modification; tRNA-queuosine biosynthesis. Functionally, catalyzes the base-exchange of a guanine (G) residue with the queuine precursor 7-aminomethyl-7-deazaguanine (PreQ1) at position 34 (anticodon wobble position) in tRNAs with GU(N) anticodons (tRNA-Asp, -Asn, -His and -Tyr). Catalysis occurs through a double-displacement mechanism. The nucleophile active site attacks the C1' of nucleotide 34 to detach the guanine base from the RNA, forming a covalent enzyme-RNA intermediate. The proton acceptor active site deprotonates the incoming PreQ1, allowing a nucleophilic attack on the C1' of the ribose to form the product. After dissociation, two additional enzymatic reactions on the tRNA convert PreQ1 to queuine (Q), resulting in the hypermodified nucleoside queuosine (7-(((4,5-cis-dihydroxy-2-cyclopenten-1-yl)amino)methyl)-7-deazaguanosine). This Thermoanaerobacter pseudethanolicus (strain ATCC 33223 / 39E) (Clostridium thermohydrosulfuricum) protein is Queuine tRNA-ribosyltransferase.